A 114-amino-acid polypeptide reads, in one-letter code: Protein U68 (114 aa).

It belongs to the herpesviridae UL96 family.

In Human herpesvirus 6A (strain Uganda-1102) (HHV-6 variant A), this protein is Protein U68 (U68).